Consider the following 410-residue polypeptide: 2-hydroxy-5-methyl-1-naphthoate 7-hydroxylase (410 aa).

Cysteine 350 contacts heme.

Belongs to the cytochrome P450 family. Heme serves as cofactor.

The enzyme catalyses 2-hydroxy-5-methyl-1-naphthoate + 2 reduced [2Fe-2S]-[ferredoxin] + O2 + 2 H(+) = 2,7-dihydroxy-5-methyl-1-naphthoate + 2 oxidized [2Fe-2S]-[ferredoxin] + H2O. The protein operates within antibiotic biosynthesis. Its function is as follows. Involved in the biosynthesis of the naphthoic acid (NA) moiety in the chromophore of the enedyine antitumor antibiotic neocarzinostatin (NCS). Catalyzes the hydroxylation at C-7 position of 2-hydroxy-5-methyl-1-naphthoate to yield 2,7-dihydroxy-5-methyl-1-naphthoate. This Streptomyces carzinostaticus protein is 2-hydroxy-5-methyl-1-naphthoate 7-hydroxylase.